A 28-amino-acid polypeptide reads, in one-letter code: Omega-agatoxin-Aa2a (28 aa).

It belongs to the neurotoxin 04 (omega-agtx) family. 03 (type II/III omega-agtx) subfamily. Expressed by the venom gland.

The protein localises to the secreted. Its function is as follows. Omega-agatoxin are antagonist of voltage-gated calcium channels. They block insect neuromuscular transmission presynaptically. Potent blocker of N-type calcium channels (Cav2.2/CACNA1B). The sequence is that of Omega-agatoxin-Aa2a from Agelenopsis aperta (North American funnel-web spider).